The chain runs to 207 residues: Guanylate kinase (207 aa).

The Guanylate kinase-like domain occupies 5–183; the sequence is GTLYIISAPS…ALYELEAIVE (179 aa). Residue 12-19 coordinates ATP; sequence APSGAGKT.

This sequence belongs to the guanylate kinase family.

Its subcellular location is the cytoplasm. It carries out the reaction GMP + ATP = GDP + ADP. Its function is as follows. Essential for recycling GMP and indirectly, cGMP. The chain is Guanylate kinase from Alcanivorax borkumensis (strain ATCC 700651 / DSM 11573 / NCIMB 13689 / SK2).